The sequence spans 136 residues: Histone H3 (136 aa).

A disordered region spans residues 1–42 (MARTKQTARKSTGGKAPRKQIAAKAARKAAPSTGGVKKPHRY). Lys-5 bears the N6,N6,N6-trimethyllysine; alternate mark. Lys-5 carries the N6,N6-dimethyllysine; alternate modification. 2 positions are modified to N6-methyllysine; alternate: Lys-5 and Lys-10. The residue at position 10 (Lys-10) is an N6-acetyllysine; alternate. A Phosphoserine modification is found at Ser-11. At Lys-15 the chain carries N6,N6-dimethyllysine; alternate. An N6-acetyllysine; alternate mark is found at Lys-15, Lys-19, Lys-24, Lys-28, and Lys-37. An N6-methyllysine; alternate mark is found at Lys-19, Lys-24, Lys-28, and Lys-37. The segment covering 19-31 (KQIAAKAARKAAP) has biased composition (low complexity). Residues Lys-28 and Lys-37 each carry the N6,N6,N6-trimethyllysine; alternate modification. 2 positions are modified to N6,N6-dimethyllysine; alternate: Lys-28 and Lys-37. Residues Lys-57 and Lys-65 each carry the N6-acetyllysine modification. Lys-80 is modified (N6,N6,N6-trimethyllysine; alternate). An N6,N6-dimethyllysine; alternate modification is found at Lys-80. Lys-80 is modified (N6-methyllysine; alternate).

The protein belongs to the histone H3 family. As to quaternary structure, the nucleosome is a histone octamer containing two molecules each of H2A, H2B, H3 and H4 assembled in one H3-H4 heterotetramer and two H2A-H2B heterodimers. The octamer wraps approximately 147 bp of DNA. Phosphorylated to form H3S10ph. H3S10ph promotes subsequent H3K14ac formation and is required for transcriptional activation through TBP recruitment to the promoters. In terms of processing, mono-, di- and trimethylated by the COMPASS complex to form H3K4me1/2/3. H3K4me activates gene expression by regulating transcription elongation and plays a role in telomere length maintenance. H3K4me enrichment correlates with transcription levels, and occurs in a 5' to 3' gradient with H3K4me3 enrichment at the 5'-end of genes, shifting to H3K4me2 and then H3K4me1. Methylated by SET2 to form H3K36me. H3K36me represses gene expression. Methylated by DOT1 to form H3K79me. H3K79me is required for association of SIR proteins with telomeric regions and for telomeric silencing. The COMPASS-mediated formation of H3K4me2/3 and the DOT1-mediated formation of H3K79me require H2BK123ub1. Post-translationally, acetylation of histone H3 leads to transcriptional activation. H3K14ac formation by GCN5 is promoted by H3S10ph. H3K14ac can also be formed by ESA1. H3K56ac formation occurs predominantly in newly synthesized H3 molecules during G1, S and G2/M of the cell cycle and may be involved in DNA repair.

It is found in the nucleus. The protein localises to the chromosome. In terms of biological role, core component of nucleosome. Nucleosomes wrap and compact DNA into chromatin, limiting DNA accessibility to the cellular machineries which require DNA as a template. Histones thereby play a central role in transcription regulation, DNA repair, DNA replication and chromosomal stability. DNA accessibility is regulated via a complex set of post-translational modifications of histones, also called histone code, and nucleosome remodeling. This Coccidioides immitis (strain RS) (Valley fever fungus) protein is Histone H3 (HHT1).